The sequence spans 474 residues: Pyruvate kinase (474 aa).

R37 is a binding site for substrate. 3 residues coordinate K(+): N39, S41, and D71. 39 to 42 (NFSH) is an ATP binding site. ATP contacts are provided by R78 and K160. E222 contacts Mg(2+). Residues G245, D246, and T278 each coordinate substrate. Position 246 (D246) interacts with Mg(2+).

This sequence belongs to the pyruvate kinase family. As to quaternary structure, homotetramer. Mg(2+) serves as cofactor. The cofactor is K(+).

It carries out the reaction pyruvate + ATP = phosphoenolpyruvate + ADP + H(+). It functions in the pathway carbohydrate degradation; glycolysis; pyruvate from D-glyceraldehyde 3-phosphate: step 5/5. The protein is Pyruvate kinase (ttuE) of Agrobacterium vitis (Rhizobium vitis).